The chain runs to 552 residues: Polypeptide N-acetylgalactosaminyltransferase 14 (552 aa).

The Cytoplasmic portion of the chain corresponds to 1–6; sequence MRRLTR. Residues 7–26 form a helical; Signal-anchor for type II membrane protein membrane-spanning segment; sequence RLVLPVFGVLWITVLLFFWV. The Lumenal portion of the chain corresponds to 27 to 552; the sequence is TKRKLEVPTG…MSQHWDMVSS (526 aa). Intrachain disulfides connect Cys-101/Cys-328, Cys-319/Cys-397, Cys-430/Cys-449, Cys-476/Cys-493, and Cys-517/Cys-538. The interval 110 to 215 is catalytic subdomain A; sequence LPPTSIIITF…RDWLQPLLHR (106 aa). Substrate is bound by residues Asp-151 and Arg-176. Residue Asp-199 coordinates Mn(2+). Substrate is bound at residue Ser-200. His-201 serves as a coordination point for Mn(2+). Residues 274-336 form a catalytic subdomain B region; it reads PIRTPIIAGG…PCSRVGHVFR (63 aa). Trp-305 serves as a coordination point for substrate. His-333 is a binding site for Mn(2+). Substrate contacts are provided by Arg-336, His-339, and Tyr-341. A Ricin B-type lectin domain is found at 415–550; the sequence is KESSIQKGNI…SLMSQHWDMV (136 aa).

Belongs to the glycosyltransferase 2 family. GalNAc-T subfamily. The cofactor is Mn(2+). Detected in renal tubules (at protein level). Highly expressed in fetal and adult kidney. Widely expressed at low level. Weakly expressed in whole brain, cerebellum, thymus, lung, mammary gland, liver, stomach, small intestine, colon, pancreas, spleen, bladder, uterus, placenta, testis, ovary, skeletal muscle, leukocyte, B-cell, bone marrow, fetal brain, fetal thymus, fetal lung, fetal liver, fetal small intestine, fetal spleen, fetal skeletal and fetus. Detected in renal tubules (at protein level).

It localises to the golgi apparatus membrane. It carries out the reaction L-seryl-[protein] + UDP-N-acetyl-alpha-D-galactosamine = a 3-O-[N-acetyl-alpha-D-galactosaminyl]-L-seryl-[protein] + UDP + H(+). The enzyme catalyses L-threonyl-[protein] + UDP-N-acetyl-alpha-D-galactosamine = a 3-O-[N-acetyl-alpha-D-galactosaminyl]-L-threonyl-[protein] + UDP + H(+). It participates in protein modification; protein glycosylation. Catalyzes the initial reaction in O-linked oligosaccharide biosynthesis, the transfer of an N-acetyl-D-galactosamine residue to a serine or threonine residue on the protein receptor. Displays activity toward mucin-derived peptide substrates such as Muc2, Muc5AC, Muc7, and Muc13 (-58). May be involved in O-glycosylation in kidney. The polypeptide is Polypeptide N-acetylgalactosaminyltransferase 14 (GALNT14) (Homo sapiens (Human)).